A 184-amino-acid chain; its full sequence is Spiro-conjugate synthase (184 aa).

An intrachain disulfide couples C57 to C184. Q115 provides a ligand contact to (1S,3R,6R,8R,9R,11R,14S,15S,19R,20R)-8-ethyl-9,15-dihydroxy-3,4,6,20-tetramethyl-21,23-dioxo-24-azapentacyclo[20.2.1.0(1,6).0(11,20).0(14,19)]pentacosa-4,12,22(25)-trien-25-olate.

Homodimer.

The enzyme catalyses 4-[(1R,2R,4aS,5S,8aR)-2-[(2R,3R,5E,7E)-3-ethyl-2-hydroxy-5,7-dimethylnona-5,7-dien-1-yl]-5-hydroxy-1-methyl-1,2,4a,5,6,7,8,8a-octahydronaphthalene-1-carbonyl]-2-methylidene-5-oxo-2,5-dihydro-1H-pyrrol-3-olate = (1S,3R,6R,8R,9R,11R,14S,15S,19R,20R)-8-ethyl-9,15-dihydroxy-3,4,6,20-tetramethyl-21,23-dioxo-24-azapentacyclo[20.2.1.0(1,6).0(11,20).0(14,19)]pentacosa-4,12,22(25)-trien-25-olate. Its pathway is antibiotic biosynthesis. Involved in the biosynthesis of the spirotetramate antibiotics pyrroindomycins. Catalyzes the intramolecular cyclization forming the spiro-conjugate moiety in pyrroindomycins, via an exo-selective [4+2] cycloaddition reaction. This is Spiro-conjugate synthase from Streptomyces rugosporus.